The following is a 150-amino-acid chain: 3-hydroxyacyl-[acyl-carrier-protein] dehydratase FabZ (150 aa).

His51 is a catalytic residue.

It belongs to the thioester dehydratase family. FabZ subfamily.

It localises to the cytoplasm. It catalyses the reaction a (3R)-hydroxyacyl-[ACP] = a (2E)-enoyl-[ACP] + H2O. Its function is as follows. Involved in unsaturated fatty acids biosynthesis. Catalyzes the dehydration of short chain beta-hydroxyacyl-ACPs and long chain saturated and unsaturated beta-hydroxyacyl-ACPs. The chain is 3-hydroxyacyl-[acyl-carrier-protein] dehydratase FabZ from Rubrobacter xylanophilus (strain DSM 9941 / JCM 11954 / NBRC 16129 / PRD-1).